The primary structure comprises 131 residues: Phosphoribosyl-AMP cyclohydrolase (131 aa).

Asp-78 lines the Mg(2+) pocket. Cys-79 lines the Zn(2+) pocket. Mg(2+) contacts are provided by Asp-80 and Asp-82. The Zn(2+) site is built by Cys-96 and Cys-103.

The protein belongs to the PRA-CH family. Homodimer. The cofactor is Mg(2+). Zn(2+) is required as a cofactor.

It localises to the cytoplasm. The catalysed reaction is 1-(5-phospho-beta-D-ribosyl)-5'-AMP + H2O = 1-(5-phospho-beta-D-ribosyl)-5-[(5-phospho-beta-D-ribosylamino)methylideneamino]imidazole-4-carboxamide. It participates in amino-acid biosynthesis; L-histidine biosynthesis; L-histidine from 5-phospho-alpha-D-ribose 1-diphosphate: step 3/9. Catalyzes the hydrolysis of the adenine ring of phosphoribosyl-AMP. The chain is Phosphoribosyl-AMP cyclohydrolase from Thioalkalivibrio sulfidiphilus (strain HL-EbGR7).